The primary structure comprises 209 residues: NADH-quinone oxidoreductase subunit C (209 aa).

Belongs to the complex I 30 kDa subunit family. As to quaternary structure, NDH-1 is composed of 14 different subunits. Subunits NuoB, C, D, E, F, and G constitute the peripheral sector of the complex.

It localises to the cell inner membrane. It carries out the reaction a quinone + NADH + 5 H(+)(in) = a quinol + NAD(+) + 4 H(+)(out). In terms of biological role, NDH-1 shuttles electrons from NADH, via FMN and iron-sulfur (Fe-S) centers, to quinones in the respiratory chain. The immediate electron acceptor for the enzyme in this species is believed to be ubiquinone. Couples the redox reaction to proton translocation (for every two electrons transferred, four hydrogen ions are translocated across the cytoplasmic membrane), and thus conserves the redox energy in a proton gradient. This is NADH-quinone oxidoreductase subunit C from Phenylobacterium zucineum (strain HLK1).